The following is an 844-amino-acid chain: Beta-mannosidase B (844 aa).

Glutamate 432 functions as the Proton donor in the catalytic mechanism. Asparagine 723 carries N-linked (GlcNAc...) asparagine glycosylation.

Belongs to the glycosyl hydrolase 2 family. Beta-mannosidase B subfamily.

The enzyme catalyses Hydrolysis of terminal, non-reducing beta-D-mannose residues in beta-D-mannosides.. It participates in glycan metabolism; N-glycan degradation. Its function is as follows. Exoglycosidase that cleaves the single beta-linked mannose residue from the non-reducing end of beta-mannosidic oligosaccharides of various complexity and length. Prefers mannobiose over mannotriose and has no activity against polymeric mannan. Is also severely restricted by galactosyl substitutions at the +1 subsite. This chain is Beta-mannosidase B (mndB), found in Aspergillus niger (strain ATCC MYA-4892 / CBS 513.88 / FGSC A1513).